Consider the following 389-residue polypeptide: MEGLCLNLDCSELPNSSWVNSSMENQNHSSNSTRDPLKRNEEVAKVEVTVLALILFLALAGNICVLLGIYINRHKHSRMYFFMKHLSIADLVVAIFQVLPQLIWDITFRFYAPDLVCRLVTYLQVVGMFASTYMLLLMSLDRCLAICQPLRSLHRRSDCVYVLFTWILSFLLSTPQTVIFSLTEVGNGVYDCRADFIQPWGPKAYITWITLAVYIIPVMILSVCYGLISYKIWQNIRLKTVCESNLRLSTSRRATLSRVSSVRLISKAKIRTVKMTFIIVLAYIVCWTPFFFVQMWSVWDPNPPKEASLFIIAMLLGSLNSCCNPWIYMLFTGHLFHDLLQSFLCCSARYLKTQQQGSDLSASRKSNSSTFVLSRKSSSQKSITQPSTA.

Residues 1–50 (MEGLCLNLDCSELPNSSWVNSSMENQNHSSNSTRDPLKRNEEVAKVEVTV) lie on the Extracellular side of the membrane. N-linked (GlcNAc...) asparagine glycans are attached at residues Asn-15, Asn-20, Asn-27, and Asn-31. The chain crosses the membrane as a helical span at residues 51–71 (LALILFLALAGNICVLLGIYI). Topologically, residues 72–87 (NRHKHSRMYFFMKHLS) are cytoplasmic. A helical transmembrane segment spans residues 88–108 (IADLVVAIFQVLPQLIWDITF). Over 109–119 (RFYAPDLVCRL) the chain is Extracellular. Cys-117 and Cys-192 are joined by a disulfide. Residues 120–140 (VTYLQVVGMFASTYMLLLMSL) traverse the membrane as a helical segment. Over 141–159 (DRCLAICQPLRSLHRRSDC) the chain is Cytoplasmic. Residues 160-180 (VYVLFTWILSFLLSTPQTVIF) traverse the membrane as a helical segment. Residues 181–207 (SLTEVGNGVYDCRADFIQPWGPKAYIT) are Extracellular-facing. Residues 208–228 (WITLAVYIIPVMILSVCYGLI) form a helical membrane-spanning segment. The Cytoplasmic portion of the chain corresponds to 229–275 (SYKIWQNIRLKTVCESNLRLSTSRRATLSRVSSVRLISKAKIRTVKM). A helical transmembrane segment spans residues 276-296 (TFIIVLAYIVCWTPFFFVQMW). Residues 297–308 (SVWDPNPPKEAS) lie on the Extracellular side of the membrane. Residues 309 to 329 (LFIIAMLLGSLNSCCNPWIYM) form a helical membrane-spanning segment. The Cytoplasmic segment spans residues 330–389 (LFTGHLFHDLLQSFLCCSARYLKTQQQGSDLSASRKSNSSTFVLSRKSSSQKSITQPSTA). The segment at 360–389 (LSASRKSNSSTFVLSRKSSSQKSITQPSTA) is disordered.

Belongs to the G-protein coupled receptor 1 family. Vasopressin/oxytocin receptor subfamily. As to expression, highly expressed in the bladder. Also expressed in kidney, brain and skeletal muscle.

It is found in the cell membrane. Binds to mesotocin and may play a role in the regulation of water and salt transport. In Rhinella marina (Cane toad), this protein is Mesotocin receptor.